A 142-amino-acid chain; its full sequence is Large ribosomal subunit protein uL11 (142 aa).

It belongs to the universal ribosomal protein uL11 family. In terms of assembly, part of the ribosomal stalk of the 50S ribosomal subunit. Interacts with L10 and the large rRNA to form the base of the stalk. L10 forms an elongated spine to which L12 dimers bind in a sequential fashion forming a multimeric L10(L12)X complex. One or more lysine residues are methylated.

In terms of biological role, forms part of the ribosomal stalk which helps the ribosome interact with GTP-bound translation factors. This Buchnera aphidicola subsp. Acyrthosiphon pisum (strain APS) (Acyrthosiphon pisum symbiotic bacterium) protein is Large ribosomal subunit protein uL11.